A 2545-amino-acid chain; its full sequence is Methylphloroacetophenone synthase (2545 aa).

Residues 8-261 (AFGALAPWPA…HVAIHEGIPQ (254 aa)) form an N-terminal acylcarrier protein transacylase (SAT) domain region. In terms of domain architecture, Ketosynthase family 3 (KS3) spans 383 to 798 (KDAIAIIGMG…GSNAAMIVLE (416 aa)). Active-site for beta-ketoacyl synthase activity residues include cysteine 547, histidine 682, and histidine 721. Residues 914 to 1218 (LCFGGQVSDR…VSLQLNKPNS (305 aa)) are malonyl-CoA:ACP transacylase (MAT) domain. Serine 1001 acts as the For acyl/malonyl transferase activity in catalysis. Residues 1293 to 1423 (LPAVLIRLKS…GTVNLKVADD (131 aa)) are N-terminal hotdog fold. The PKS/mFAS DH domain occupies 1293-1605 (LPAVLIRLKS…FTDIRRPVPI (313 aa)). Residues 1296–1604 (VLIRLKSFDS…NFTDIRRPVP (309 aa)) are product template (PT) domain. Residues 1449 to 1605 (RSESLRGNVL…FTDIRRPVPI (157 aa)) are C-terminal hotdog fold. One can recognise a Carrier domain in the interval 1657-1731 (TSIYEDICGL…SLVDYLHGKG (75 aa)). Serine 1691 carries the post-translational modification O-(pantetheine 4'-phosphoryl)serine. Residues 1748-1768 (SSSHAISTGASSPPDSSGASA) show a composition bias toward low complexity. The interval 1748 to 1773 (SSSHAISTGASSPPDSSGASAMTTPP) is disordered. Residues 1931 to 2163 (FGASETKLLN…GFKHVSWTDG (233 aa)) are methyltransferase (CMeT) domain. Positions 2198–2544 (AGVPMEEVVW…YDFICRQLGM (347 aa)) are claisen cyclase (CLC) domain. Catalysis depends on for thioesterase activity residues serine 2321, aspartate 2481, and histidine 2513.

Methylphloroacetophenone synthase; part of the gene cluster that mediates the biosynthesis of usnic acid, a dibenzofuran lichen product possessing a broad spectrum of biological activities. Two genes, mpas and mpao, comprise the usnic acid biosynthetic gene cluster with a single post-PKS enzyme, the methylphloracetophenone oxidase (mpao). The methylphloroacetophenone synthase (mpas) is a non-reducing polyketide synthase that produces methylphloracetophenone from acetate via a methylated tetraketide intermediate. The methylphloroacetophenone oxidase then carries out the oxidative dimerization of methylphloracetophenone to usnic acid. The chain is Methylphloroacetophenone synthase from Cladonia uncialis (Cup lichen).